The primary structure comprises 670 residues: MSRSAFTALLLSCVLLALSMPARADDLPYRFGLGKADITGEAAEVGMMGYSSLEQKTAGIHMRQWARAFVIEEAASGRRLVYVNTDLGMIFQAVHLKVLARLKAKYPGVYDENNVMLAATHTHSGPGGFSHYAMYNLSVLGFQEKTFNAIVDGIVRSIERAQARLQPGRLFYGSGELRNANRNRSLLSHLKNPDIVGYEDGIDPQMSVLSFVDANGELAGAISWFPVHSTSMTNANHLISPDNKGYASYHWEHDVSRKSGFVAAFAQTNAGNLSPNLNLKPGSGPFDNEFDNTREIGLRQFAKAYEIAGQAQEEVLGELDSRFRFVDFTRLPIRPEFTDGQPRQLCTAAIGTSLAAGSTEDGPGPLGLEEGNNPFLSALGGLLTGVPPQELVQCQAEKTILADTGNKKPYPWTPTVLPIQMFRIGQLELLGAPAEFTVMAGVRIRRAVQAASEAAGIRHVVFNGYANAYASYVTTREEYAAQEYEGGSTLYGPWTQAAYQQLFVDMAVALRERLPVETSAIAPDLSCCQMNFQTGVVADDPYIGKSFGDVLQQPRESYRIGDKVTVAFVTGHPKNDLRTEKTFLEVVNIGKDGKQTPETVATDNDWDTQYRWERVGISASKATISWSIPPGTEPGHYYIRHYGNAKNFWTQKISEIGGSTRSFEVLGTTP.

The first 24 residues, 1–24, serve as a signal peptide directing secretion; the sequence is MSRSAFTALLLSCVLLALSMPARA. Histidine 61 lines the Mg(2+) pocket. Substrate-binding residues include asparagine 84, glutamine 92, and aspartate 111. Histidine 121 contacts Zn(2+). Serine 130 contributes to the substrate binding site. Residue histidine 228 coordinates Zn(2+). The active-site Nucleophile is the serine 274. Residues cysteine 346 and cysteine 394 are joined by a disulfide bond. Glutamate 435 contributes to the Zn(2+) binding site. Substrate is bound at residue tyrosine 469. Tyrosine 472 provides a ligand contact to Zn(2+). Residues aspartate 603, aspartate 605, and threonine 608 each coordinate Mg(2+). The required for correct folding and localization stretch occupies residues 644 to 670; the sequence is NAKNFWTQKISEIGGSTRSFEVLGTTP.

This sequence belongs to the neutral ceramidase family. In terms of assembly, homodimer. The cofactor is Zn(2+). Requires Mg(2+) as cofactor.

It localises to the secreted. It carries out the reaction an N-acylsphing-4-enine + H2O = sphing-4-enine + a fatty acid. Its activity is regulated as follows. Inhibited by EDTA, EGTA and D/L-sphinganine D-erythro-sphingosine. L-erythro-sphingosine is a less powerful inhibitor. Stimulated by glycerophospholipids: cardiolipin is the most effective, followed by phosphatidic acid, phosphatidylethanolamine and phosphatidylglycerol, whereas phosphatidylcholine, lysophosphatidic acid and diacylglycerol are less effective. Catalyzes the cleavage of the N-acyl linkage of the ceramides (Cers) to yield sphingosine (Sph) and free fatty acid at an optimal pH of 8-9. Also catalyzes the synthesis of Cers from Sph and fatty acid. The sequence is that of Neutral ceramidase from Pseudomonas aeruginosa (strain ATCC 15692 / DSM 22644 / CIP 104116 / JCM 14847 / LMG 12228 / 1C / PRS 101 / PAO1).